The primary structure comprises 394 residues: ORC1-type DNA replication protein 3 (394 aa).

Residues 66–70 and Tyr207 each bind ATP; that span reads TGKTF.

This sequence belongs to the CDC6/cdc18 family. As to quaternary structure, monomer. Interacts with Cdc6-1, Cdc6-2, MCM and PolB1.

Involved in regulation of DNA replication. May play essential roles in origin recognition and cell cycle control of replication. Binds to DNA, with a preference for molecules that contain a bubble, a fork, or a tail. Inhibits the binding of the MCM helicase to the origin DNA and inhibits its DNA helicase activity. Also regulates the DNA polymerase and the nuclease activities of PolB1. Inhibits the DNA-binding activity of Cdc6-1 and Cdc6-2. This Saccharolobus solfataricus (strain ATCC 35092 / DSM 1617 / JCM 11322 / P2) (Sulfolobus solfataricus) protein is ORC1-type DNA replication protein 3 (cdc6-3).